Reading from the N-terminus, the 382-residue chain is uncharacterized protein (382 aa).

The next 12 helical transmembrane spans lie at 14-34 (GLLL…LWLA), 45-65 (VVSS…GYVI), 79-99 (FIFA…SWLA), 102-122 (FVAG…LMCS), 131-151 (LLAA…LLVS), 157-177 (LMSV…PLLF), 204-224 (LGVN…GLMP), 235-255 (ASIG…QWPI), 270-290 (VQVF…AMAP), 291-311 (ALFI…AWAC), 325-345 (ALLL…AMLM), and 348-368 (FSDN…LLML).

This sequence belongs to the major facilitator superfamily. YcaD (TC 2.A.1.26) family.

The protein resides in the cell inner membrane. This is an uncharacterized protein from Shigella sonnei (strain Ss046).